The primary structure comprises 283 residues: NifU-like protein 4, mitochondrial (283 aa).

Residues 1 to 48 constitute a mitochondrion transit peptide; that stretch reads MKGIARLVTSLSRIGGRKVVSGTSTVTSSSSSSLLLSRRSLFISATNL.

This sequence belongs to the NifU family. As to expression, predominantly expressed in roots.

The protein localises to the mitochondrion. Its function is as follows. Molecular scaffold for [Fe-S] cluster assembly of mitochondrial iron-sulfur proteins. The sequence is that of NifU-like protein 4, mitochondrial (NIFU4) from Arabidopsis thaliana (Mouse-ear cress).